A 1530-amino-acid chain; its full sequence is Coiled-coil domain-containing protein 141 (1530 aa).

The stretch at 49–127 (NLLEIGSSQD…SMLERRRELL (79 aa)) is one Spectrin repeat. The residue at position 91 (T91) is a Phosphothreonine. 3 coiled-coil regions span residues 220–251 (IDSL…VLQL), 758–785 (LKEK…YEEI), and 865–967 (AKSL…VNKK). 4 disordered regions span residues 1153–1240 (SEER…PASS), 1259–1285 (LGKA…DTFT), 1324–1356 (PREV…SNVT), and 1369–1403 (SPGL…SVVS). A compositionally biased stretch (polar residues) spans 1334–1345 (PSSQAQEISLGT). One can recognise an Ig-like domain in the interval 1409-1497 (PHFSRLLSNV…GTLSSKAILH (89 aa)).

Interacts with DISC1. Interacts preferentially with phosphorylated forms of myosin regulatory light chain (MRLC). Interacts (via the N-terminal region) with HDAC6; inhibits the deacetylase activity of HDAC6. Interacts with KIBRA (via the C-terminal region); retains AMPAR in the cytosol after internalization. Ubiquitinated and degradated by the CDC20-APC/C pathway. During brain development, CDC20-APC/C complex degrades CCDC141 after centrosome translocation into the dilated area. CCDC141 is restabilized in the dilation until the centrosome enters the dilation, at which point it is once again immediately destabilized by CDC20-APC/C complex. The oscillatory regulation of CCDC141 protein is needed for proper cortical migration. Post-translationally, phosphorylation at Thr-91 by PLK1 affects CCDC141 degradation.

The protein resides in the cytoplasm. It is found in the cytoskeleton. Its subcellular location is the microtubule organizing center. It localises to the centrosome. In terms of biological role, plays a critical role in cortical radial and GnRH neurons migration during brain development. Regulates cortical radial migration by negatively controlling the activity of histone deacetylase 6 (HDAC6) and promotes centrosome maturation. CAMDI is required for dilation formation of cortical neurons during radial migration. Plays a critical role in learning and memory performance through regulation of AMPA-selective glutamate receptors (AMPARs) cell surface expression in competition with KIBRA. This Rattus norvegicus (Rat) protein is Coiled-coil domain-containing protein 141.